Here is a 449-residue protein sequence, read N- to C-terminus: tRNA modification GTPase MnmE (449 aa).

Residues R24, E81, and K121 each contribute to the (6S)-5-formyl-5,6,7,8-tetrahydrofolate site. The TrmE-type G domain occupies 218–375 (GLVVAITGPP…LIAALGKFAA (158 aa)). GTP contacts are provided by residues 228–233 (NVGKST), 247–253 (SPHAGTT), and 272–275 (DTAG). S232 and T253 together coordinate Mg(2+). K449 contributes to the (6S)-5-formyl-5,6,7,8-tetrahydrofolate binding site.

Belongs to the TRAFAC class TrmE-Era-EngA-EngB-Septin-like GTPase superfamily. TrmE GTPase family. In terms of assembly, homodimer. Heterotetramer of two MnmE and two MnmG subunits. K(+) is required as a cofactor.

It is found in the cytoplasm. Exhibits a very high intrinsic GTPase hydrolysis rate. Involved in the addition of a carboxymethylaminomethyl (cmnm) group at the wobble position (U34) of certain tRNAs, forming tRNA-cmnm(5)s(2)U34. The protein is tRNA modification GTPase MnmE of Rhodopseudomonas palustris (strain BisB18).